A 272-amino-acid chain; its full sequence is Shikimate dehydrogenase (NADP(+)) (272 aa).

Shikimate-binding positions include 20–22 (TMS) and threonine 67. The active-site Proton acceptor is the lysine 71. NADP(+) is bound at residue glutamate 83. Shikimate is bound by residues asparagine 92 and aspartate 107. Residues 129–133 (GAGGA), 153–158 (NRTKSK), and leucine 216 each bind NADP(+). Tyrosine 218 is a binding site for shikimate. Position 239 (glycine 239) interacts with NADP(+).

The protein belongs to the shikimate dehydrogenase family. As to quaternary structure, homodimer.

The catalysed reaction is shikimate + NADP(+) = 3-dehydroshikimate + NADPH + H(+). The protein operates within metabolic intermediate biosynthesis; chorismate biosynthesis; chorismate from D-erythrose 4-phosphate and phosphoenolpyruvate: step 4/7. Involved in the biosynthesis of the chorismate, which leads to the biosynthesis of aromatic amino acids. Catalyzes the reversible NADPH linked reduction of 3-dehydroshikimate (DHSA) to yield shikimate (SA). The polypeptide is Shikimate dehydrogenase (NADP(+)) (Maridesulfovibrio salexigens (strain ATCC 14822 / DSM 2638 / NCIMB 8403 / VKM B-1763) (Desulfovibrio salexigens)).